Consider the following 359-residue polypeptide: Protein RecA (359 aa).

ATP is bound at residue 64-71 (GHESSGKT). Residues 328–359 (NKYPNKDSNDSPKEGSKIKTKVNPAVTQDELI) form a disordered region. A compositionally biased stretch (basic and acidic residues) spans 331 to 344 (PNKDSNDSPKEGSK).

The protein belongs to the RecA family.

It is found in the cytoplasm. Functionally, can catalyze the hydrolysis of ATP in the presence of single-stranded DNA, the ATP-dependent uptake of single-stranded DNA by duplex DNA, and the ATP-dependent hybridization of homologous single-stranded DNAs. It interacts with LexA causing its activation and leading to its autocatalytic cleavage. The sequence is that of Protein RecA from Francisella tularensis subsp. novicida (strain U112).